We begin with the raw amino-acid sequence, 353 residues long: D-alanine--D-alanine ligase (353 aa).

The region spanning lysine 141–glutamate 349 is the ATP-grasp domain. Glutamate 176–glutamate 231 is a binding site for ATP. Residues aspartate 302, glutamate 316, and asparagine 318 each coordinate Mg(2+).

This sequence belongs to the D-alanine--D-alanine ligase family. Requires Mg(2+) as cofactor. Mn(2+) is required as a cofactor.

The protein resides in the cytoplasm. It carries out the reaction 2 D-alanine + ATP = D-alanyl-D-alanine + ADP + phosphate + H(+). Its pathway is cell wall biogenesis; peptidoglycan biosynthesis. Cell wall formation. This Parasynechococcus marenigrum (strain WH8102) protein is D-alanine--D-alanine ligase.